We begin with the raw amino-acid sequence, 180 residues long: Large ribosomal subunit protein uL5c (180 aa).

It belongs to the universal ribosomal protein uL5 family. In terms of assembly, part of the 50S ribosomal subunit; contacts the 5S rRNA.

The protein resides in the plastid. Its subcellular location is the chloroplast. In terms of biological role, binds 5S rRNA, forms part of the central protuberance of the 50S subunit. This chain is Large ribosomal subunit protein uL5c (rpl5), found in Oltmannsiellopsis viridis (Marine flagellate).